We begin with the raw amino-acid sequence, 130 residues long: MASVKLASLIVLFATLGMFLTKNVGAISCNGVCSPFDIPPCGSPLCRCIPAGLVIGNCRNPYGVFLRTNDEHPNLCESDADCRKKGSGTFCGHYPNPDIEYGWCFASKSEAEDVFSKITPKDLLKSVSTA.

Positions 1–26 (MASVKLASLIVLFATLGMFLTKNVGA) are cleaved as a signal peptide. 3 disulfide bridges follow: C29/C46, C33/C48, and C41/C58. 2 consecutive propeptides follow at residues 64 to 69 (VFLRTN) and 123 to 130 (LLKSVSTA).

The C-terminal glycine may be removed from PA1b. In terms of tissue distribution, major component of both the cotyledons and embryonic axes of mature seeds.

Its function is as follows. PA1b binds to basic 7S globulin (BG) and stimulates its phosphorylation activity. Involved in the signal transduction system to regulate the growth and differentiation as a hormone peptide. Toxic to various insects through binding to a high affinity binding site in the insect gut. This Pisum sativum (Garden pea) protein is Albumin-1 C.